The sequence spans 515 residues: ATP synthase subunit alpha (515 aa).

169 to 176 (GDRQTGKT) is a binding site for ATP.

This sequence belongs to the ATPase alpha/beta chains family. In terms of assembly, F-type ATPases have 2 components, CF(1) - the catalytic core - and CF(0) - the membrane proton channel. CF(1) has five subunits: alpha(3), beta(3), gamma(1), delta(1), epsilon(1). CF(0) has three main subunits: a(1), b(2) and c(9-12). The alpha and beta chains form an alternating ring which encloses part of the gamma chain. CF(1) is attached to CF(0) by a central stalk formed by the gamma and epsilon chains, while a peripheral stalk is formed by the delta and b chains.

It is found in the cell inner membrane. The catalysed reaction is ATP + H2O + 4 H(+)(in) = ADP + phosphate + 5 H(+)(out). Its function is as follows. Produces ATP from ADP in the presence of a proton gradient across the membrane. The alpha chain is a regulatory subunit. The chain is ATP synthase subunit alpha from Neisseria gonorrhoeae (strain ATCC 700825 / FA 1090).